The following is a 293-amino-acid chain: Ribosomal RNA small subunit methyltransferase A (293 aa).

Residues asparagine 33, valine 35, glycine 60, glutamate 81, aspartate 111, and asparagine 130 each coordinate S-adenosyl-L-methionine.

Belongs to the class I-like SAM-binding methyltransferase superfamily. rRNA adenine N(6)-methyltransferase family. RsmA subfamily.

The protein resides in the cytoplasm. The enzyme catalyses adenosine(1518)/adenosine(1519) in 16S rRNA + 4 S-adenosyl-L-methionine = N(6)-dimethyladenosine(1518)/N(6)-dimethyladenosine(1519) in 16S rRNA + 4 S-adenosyl-L-homocysteine + 4 H(+). In terms of biological role, specifically dimethylates two adjacent adenosines (A1518 and A1519) in the loop of a conserved hairpin near the 3'-end of 16S rRNA in the 30S particle. May play a critical role in biogenesis of 30S subunits. The polypeptide is Ribosomal RNA small subunit methyltransferase A (Corynebacterium glutamicum (strain R)).